The chain runs to 387 residues: 8-amino-7-oxononanoate synthase (387 aa).

Arg19 is a substrate binding site. A pyridoxal 5'-phosphate-binding site is contributed by 106–107 (GY). Position 131 (His131) interacts with substrate. Residues Ser177, His205, and Thr236 each coordinate pyridoxal 5'-phosphate. At Lys239 the chain carries N6-(pyridoxal phosphate)lysine. Residue Thr353 coordinates substrate.

The protein belongs to the class-II pyridoxal-phosphate-dependent aminotransferase family. BioF subfamily. Homodimer. The cofactor is pyridoxal 5'-phosphate.

The enzyme catalyses 6-carboxyhexanoyl-[ACP] + L-alanine + H(+) = (8S)-8-amino-7-oxononanoate + holo-[ACP] + CO2. Its pathway is cofactor biosynthesis; biotin biosynthesis. Catalyzes the decarboxylative condensation of pimeloyl-[acyl-carrier protein] and L-alanine to produce 8-amino-7-oxononanoate (AON), [acyl-carrier protein], and carbon dioxide. This chain is 8-amino-7-oxononanoate synthase, found in Nitrosomonas europaea (strain ATCC 19718 / CIP 103999 / KCTC 2705 / NBRC 14298).